A 100-amino-acid chain; its full sequence is NADH-quinone oxidoreductase subunit K (100 aa).

3 consecutive transmembrane segments (helical) span residues 2 to 22 (VTLNHYLILSSLLFMIGLVGV), 28 to 48 (LLMLFFSTEIMLNAVNVGLVA), and 63 to 83 (FFIIAVAASEVAVGLGLLILW).

Belongs to the complex I subunit 4L family. As to quaternary structure, NDH-1 is composed of 14 different subunits. Subunits NuoA, H, J, K, L, M, N constitute the membrane sector of the complex.

The protein resides in the cell inner membrane. It carries out the reaction a quinone + NADH + 5 H(+)(in) = a quinol + NAD(+) + 4 H(+)(out). Functionally, NDH-1 shuttles electrons from NADH, via FMN and iron-sulfur (Fe-S) centers, to quinones in the respiratory chain. The immediate electron acceptor for the enzyme in this species is believed to be ubiquinone. Couples the redox reaction to proton translocation (for every two electrons transferred, four hydrogen ions are translocated across the cytoplasmic membrane), and thus conserves the redox energy in a proton gradient. The protein is NADH-quinone oxidoreductase subunit K of Wolinella succinogenes (strain ATCC 29543 / DSM 1740 / CCUG 13145 / JCM 31913 / LMG 7466 / NCTC 11488 / FDC 602W) (Vibrio succinogenes).